Here is a 365-residue protein sequence, read N- to C-terminus: Patr class I histocompatibility antigen, A-108 alpha chain (365 aa).

The N-terminal stretch at 1–24 (MAVMPPRTLLLLLSGALALTQTWA) is a signal peptide. The interval 25-114 (GSHSMRYFYT…LRGYYNQSED (90 aa)) is alpha-1. The Extracellular portion of the chain corresponds to 25–308 (GSHSMRYFYT…EPSSQPTIPI (284 aa)). Asn110 carries an N-linked (GlcNAc...) asparagine glycan. An alpha-2 region spans residues 115–206 (GSHTIQIMYG…ENGKETLQRT (92 aa)). 2 disulfide bridges follow: Cys125–Cys188 and Cys227–Cys283. The segment at 207–298 (DPPKTHMTHH…GLPKPLTLRW (92 aa)) is alpha-3. The Ig-like C1-type domain maps to 209–295 (PKTHMTHHPI…QHEGLPKPLT (87 aa)). Positions 299-308 (EPSSQPTIPI) are connecting peptide. The helical transmembrane segment at 309-332 (VGIIAGLVLLGAVITGAVVAAVMW) threads the bilayer. The Cytoplasmic segment spans residues 333–365 (RRKSSDRKGGSYTQAASSDSAQGSDVSLTACKV). The disordered stretch occupies residues 339 to 360 (RKGGSYTQAASSDSAQGSDVSL). Residue Ser343 is modified to Phosphoserine. Tyr344 is subject to Phosphotyrosine. Residues 346–359 (QAASSDSAQGSDVS) are compositionally biased toward low complexity. A phosphoserine mark is found at Ser349, Ser350, Ser352, Ser356, and Ser359.

Belongs to the MHC class I family. As to quaternary structure, heterodimer of an alpha chain and a beta chain (beta-2-microglobulin).

It localises to the membrane. Its function is as follows. Involved in the presentation of foreign antigens to the immune system. This is Patr class I histocompatibility antigen, A-108 alpha chain (Patr-A) from Pan troglodytes (Chimpanzee).